Here is a 192-residue protein sequence, read N- to C-terminus: Adenylate kinase (192 aa).

10–18 (GVPGVGSTT) lines the ATP pocket.

It belongs to the archaeal adenylate kinase family. Monomer.

It localises to the cytoplasm. The catalysed reaction is AMP + ATP = 2 ADP. The polypeptide is Adenylate kinase (adkA) (Methanocaldococcus jannaschii (strain ATCC 43067 / DSM 2661 / JAL-1 / JCM 10045 / NBRC 100440) (Methanococcus jannaschii)).